We begin with the raw amino-acid sequence, 428 residues long: Enolase (428 aa).

Residue Gln163 coordinates (2R)-2-phosphoglycerate. Glu205 serves as the catalytic Proton donor. 3 residues coordinate Mg(2+): Asp242, Glu285, and Asp312. (2R)-2-phosphoglycerate contacts are provided by Lys337, Arg366, Ser367, and Lys388. Lys337 serves as the catalytic Proton acceptor.

It belongs to the enolase family. It depends on Mg(2+) as a cofactor.

It localises to the cytoplasm. The protein resides in the secreted. Its subcellular location is the cell surface. The enzyme catalyses (2R)-2-phosphoglycerate = phosphoenolpyruvate + H2O. It participates in carbohydrate degradation; glycolysis; pyruvate from D-glyceraldehyde 3-phosphate: step 4/5. In terms of biological role, catalyzes the reversible conversion of 2-phosphoglycerate (2-PG) into phosphoenolpyruvate (PEP). It is essential for the degradation of carbohydrates via glycolysis. This chain is Enolase, found in Nitrosomonas eutropha (strain DSM 101675 / C91 / Nm57).